A 205-amino-acid chain; its full sequence is Methylthioribulose-1-phosphate dehydratase (205 aa).

Positions 96 and 98 each coordinate Zn(2+).

It belongs to the aldolase class II family. MtnB subfamily. It depends on Zn(2+) as a cofactor.

The catalysed reaction is 5-(methylsulfanyl)-D-ribulose 1-phosphate = 5-methylsulfanyl-2,3-dioxopentyl phosphate + H2O. Its pathway is amino-acid biosynthesis; L-methionine biosynthesis via salvage pathway; L-methionine from S-methyl-5-thio-alpha-D-ribose 1-phosphate: step 2/6. Its function is as follows. Catalyzes the dehydration of methylthioribulose-1-phosphate (MTRu-1-P) into 2,3-diketo-5-methylthiopentyl-1-phosphate (DK-MTP-1-P). This chain is Methylthioribulose-1-phosphate dehydratase, found in Exiguobacterium sp. (strain ATCC BAA-1283 / AT1b).